The following is a 977-amino-acid chain: Alanine--tRNA ligase (977 aa).

Positions 512–535 are disordered; the sequence is SQVDSKLQSSTPAGTGSYDSKQVS. Residues H618, H622, C720, and H724 each coordinate Zn(2+).

This sequence belongs to the class-II aminoacyl-tRNA synthetase family. It depends on Zn(2+) as a cofactor.

The protein localises to the cytoplasm. It carries out the reaction tRNA(Ala) + L-alanine + ATP = L-alanyl-tRNA(Ala) + AMP + diphosphate. In terms of biological role, catalyzes the attachment of alanine to tRNA(Ala) in a two-step reaction: alanine is first activated by ATP to form Ala-AMP and then transferred to the acceptor end of tRNA(Ala). Also edits incorrectly charged Ser-tRNA(Ala) and Gly-tRNA(Ala) via its editing domain. The polypeptide is Alanine--tRNA ligase (Leptospira interrogans serogroup Icterohaemorrhagiae serovar copenhageni (strain Fiocruz L1-130)).